Reading from the N-terminus, the 57-residue chain is MDVKYDLNSYVRVLKLASTPSWQEFSQISKIAGAGIFLVGLLGFIIFAVMSFLPGGV.

A helical membrane pass occupies residues 33–53; the sequence is GAGIFLVGLLGFIIFAVMSFL.

It belongs to the SecE/SEC61-gamma family. In terms of assembly, component of the Sec protein translocase complex. Heterotrimer consisting of SecY (alpha), SecG (beta) and SecE (gamma) subunits. The heterotrimers can form oligomers, although 1 heterotrimer is thought to be able to translocate proteins. Interacts with the ribosome. May interact with SecDF, and other proteins may be involved.

The protein resides in the cell membrane. Functionally, essential subunit of the Sec protein translocation channel SecYEG. Clamps together the 2 halves of SecY. May contact the channel plug during translocation. In Haloferax mediterranei (strain ATCC 33500 / DSM 1411 / JCM 8866 / NBRC 14739 / NCIMB 2177 / R-4) (Halobacterium mediterranei), this protein is Protein translocase subunit SecE.